Here is a 769-residue protein sequence, read N- to C-terminus: Signal transducer and activator of transcription 3.1 (769 aa).

The Essential for nuclear import motif lies at 150–162 (DVRKKVQDLEQKM). An SH2 domain is found at 580 to 670 (WNEGYIMGFI…DATNILVSPL (91 aa)). Residue Ser-728 is modified to Phosphoserine; by NLK.

The protein belongs to the transcription factor STAT family. Forms a homodimer or a heterodimer with a related family member, such as stat1. Interacts with nlk.2. In terms of processing, phosphorylation of both tyrosine and serine residues, together with dimerization, is required for mesoderm induction.

It is found in the cytoplasm. Its subcellular location is the nucleus. Functionally, transcription factor that binds to target promoter sequences and activates transcription upon il6st/gp130 stimulation. Mediates ventralization of embryos, at least in part via inhibition of smad2 signaling. Required for hairy2 to induce dll1/delta1 and promote neural crest cell proliferation and differentiation. Involved in TGFbeta-mediated mesoderm induction in early embryos, acting downstream of map3k7/tak1 and nlk.2. This is Signal transducer and activator of transcription 3.1 (stat3.1) from Xenopus laevis (African clawed frog).